The primary structure comprises 207 residues: Small ribosomal subunit protein uS4 (207 aa).

The segment at 31–55 is disordered; it reads KCKLDSKPGQHGRTSGARTSDYGTQ. Residues 42 to 53 show a composition bias toward polar residues; it reads GRTSGARTSDYG. Positions 97-160 constitute an S4 RNA-binding domain; the sequence is SRLDNVVYRM…KKQARIVEAL (64 aa).

The protein belongs to the universal ribosomal protein uS4 family. As to quaternary structure, part of the 30S ribosomal subunit. Contacts protein S5. The interaction surface between S4 and S5 is involved in control of translational fidelity.

Its function is as follows. One of the primary rRNA binding proteins, it binds directly to 16S rRNA where it nucleates assembly of the body of the 30S subunit. Functionally, with S5 and S12 plays an important role in translational accuracy. The sequence is that of Small ribosomal subunit protein uS4 from Burkholderia thailandensis (strain ATCC 700388 / DSM 13276 / CCUG 48851 / CIP 106301 / E264).